Consider the following 432-residue polypeptide: Casein kinase II subunit alpha-4, chloroplastic (432 aa).

The N-terminal 55 residues, 1-55, are a transit peptide targeting the chloroplast; the sequence is MALRPCTGFTISSLRNASAANNNLFSLLSFSSSSPAKRNLLLSSLQDNLRRFASS. The tract at residues 63–83 is disordered; it reads LRNQQQQHQQQQQSRVKEKSE. Residues 66 to 75 show a composition bias toward low complexity; that stretch reads QQQQHQQQQQ. One can recognise a Protein kinase domain in the interval 132–417; it reads YEVVRKVGRG…AKEAMAHPYF (286 aa). Residues 138-146 and Lys-161 each bind ATP; that span reads VGRGKYSEV. Asp-249 (proton acceptor) is an active-site residue.

It belongs to the protein kinase superfamily. Ser/Thr protein kinase family. CK2 subfamily. As to quaternary structure, tetramer of two alpha and two beta chains. As to expression, expressed in root tips, lateral root primordia, cotyledons, leaf primordia, sepals, filaments, stigma, and anthers.

Its subcellular location is the plastid. The protein localises to the chloroplast. The catalysed reaction is L-seryl-[protein] + ATP = O-phospho-L-seryl-[protein] + ADP + H(+). The enzyme catalyses L-threonyl-[protein] + ATP = O-phospho-L-threonyl-[protein] + ADP + H(+). Functionally, casein kinases are operationally defined by their preferential utilization of acidic proteins such as caseins as substrates. The alpha chain contains the catalytic site. Involved in the regulation of various developmental processes. Involved in the regulation of plant growth and flowering time. Involved in retrograde signaling in plant responses to abscisic acid (ABA) and heat stress. May act as an enhancing factor in abiotic stress signaling through modulation of the expression of some molecular players in retrograde signaling. Phosphorylates RuBisCo activase (RCA) at Thr-78. This is Casein kinase II subunit alpha-4, chloroplastic from Arabidopsis thaliana (Mouse-ear cress).